Consider the following 216-residue polypeptide: MLPATEAAKIYQTNYVRNSRAIGVLWAIFTTLFAIVNVVCFVQPYWIGDGMDTPQAGYFGLFHYCIGSGMSRDLTCQGSFTEFGSIPSSAFKAASFFIGMSMVLVLSCIGCFALFFFCSTATVYKICGWMQLAAGTCLVLGCMIYPDGWDADEVKRMCGEGTDKYTIGACSVRWAYILAIMGILDALILSFLAFVLGNRQDGLMSEELLGDKSGNA.

The next 4 membrane-spanning stretches (helical) occupy residues 22-42, 96-116, 126-146, and 177-197; these read IGVL…VCFV, FFIG…ALFF, ICGW…MIYP, and ILAI…FVLG.

The protein belongs to the LHFP family.

Its subcellular location is the membrane. The protein is LHFPL tetraspan subfamily member 3 protein of Danio rerio (Zebrafish).